The sequence spans 167 residues: Transcription factor E (167 aa).

The 83-residue stretch at E5–D87 folds into the HTH TFE/IIEalpha-type domain.

It belongs to the TFE family. Monomer. Interaction with RNA polymerase subunits RpoF and RpoE is necessary for Tfe stimulatory transcription activity. Able to interact with Tbp and RNA polymerase in the absence of DNA promoter. Interacts both with the preinitiation and elongation complexes.

In terms of biological role, transcription factor that plays a role in the activation of archaeal genes transcribed by RNA polymerase. Facilitates transcription initiation by enhancing TATA-box recognition by TATA-box-binding protein (Tbp), and transcription factor B (Tfb) and RNA polymerase recruitment. Not absolutely required for transcription in vitro, but particularly important in cases where Tbp or Tfb function is not optimal. It dynamically alters the nucleic acid-binding properties of RNA polymerases by stabilizing the initiation complex and destabilizing elongation complexes. Seems to translocate with the RNA polymerase following initiation and acts by binding to the non template strand of the transcription bubble in elongation complexes. The protein is Transcription factor E of Methanothrix thermoacetophila (strain DSM 6194 / JCM 14653 / NBRC 101360 / PT) (Methanosaeta thermophila).